The following is a 524-amino-acid chain: Na(+)/H(+) antiporter NhaB (524 aa).

Helical transmembrane passes span 23–43 (LAIIAFLIINPLVFFFVSPFV), 45–65 (GWMLVIEFIFTLAMALKCYPL), 98–118 (LLLIFMVAGIYFMKQLLLFIF), 136–156 (CVASAFLSAFLDALTVIAVVI), 203–223 (LMMHAGVGTALGGVMTMVGEP), 239–259 (FFMRMLPVTLPVLCCGLLVCI), 304–324 (ALIGVWLVIALALHLAEVGLV), 325–345 (GLSVIILATSFCGITNEHALG), 358–378 (LTVFFAVVAVIIEQSLFTPII), 392–412 (LFYLFNGLLSSVSDNVFVGTV), 420–440 (AFELGVISLQQFELLAVAINT), 448–468 (ATPNGQAAFLFLLTSALAPLI), and 479–499 (ALPYTIVMTGVGLLGVEYLLV).

The protein belongs to the NhaB Na(+)/H(+) (TC 2.A.34) antiporter family.

The protein localises to the cell inner membrane. It carries out the reaction 2 Na(+)(in) + 3 H(+)(out) = 2 Na(+)(out) + 3 H(+)(in). Its function is as follows. Na(+)/H(+) antiporter that extrudes sodium in exchange for external protons. In Yersinia enterocolitica serotype O:8 / biotype 1B (strain NCTC 13174 / 8081), this protein is Na(+)/H(+) antiporter NhaB.